The sequence spans 577 residues: E3 ubiquitin-protein ligase MSL2 (577 aa).

Positions 1-116 (MNPVNATALY…CEYITQTTLA (116 aa)) are sufficient for interaction with MSL1. Positions 44, 47, 62, 64, 67, 70, 81, and 84 each coordinate Zn(2+). The segment at 44 to 85 (CCVCGHLLQDPIAPTNSTCQHYVCKTCKGKKMMMKPSCSWCK) adopts an RING-type zinc-finger fold. Lys375 is covalently cross-linked (Glycyl lysine isopeptide (Lys-Gly) (interchain with G-Cter in SUMO2)). A disordered region spans residues 405–427 (TKSMKKSHEHGSKKSHSKTKPGI). Positions 407–423 (SMKKSHEHGSKKSHSKT) are enriched in basic residues. Ser447 carries the post-translational modification Phosphoserine. In terms of domain architecture, CXC MSL2-type spans 457 to 508 (QEKKGCKCGRATQNPSVLTCRGQRCPCYSNRKACLDCICRGCQNSYMANGEK). Zn(2+) contacts are provided by Cys462, Cys464, Cys476, Cys481, Cys483, Cys490, Cys493, Cys495, and Cys498.

This sequence belongs to the MSL2 family. As to quaternary structure, component of a multisubunit histone acetyltransferase complex (MSL) at least composed of the KAT8/MOF/MYST1, MSL1/hampin, MSL2 and MSL3. Forms a MSL heterotetrameric core with MSL1.

It localises to the nucleus. The protein resides in the chromosome. It catalyses the reaction S-ubiquitinyl-[E2 ubiquitin-conjugating enzyme]-L-cysteine + [acceptor protein]-L-lysine = [E2 ubiquitin-conjugating enzyme]-L-cysteine + N(6)-ubiquitinyl-[acceptor protein]-L-lysine.. Its pathway is protein modification; protein ubiquitination. In terms of biological role, non-catalytic component of the MSL histone acetyltransferase complex, a multiprotein complex that mediates the majority of histone H4 acetylation at 'Lys-16' (H4K16ac), an epigenetic mark that prevents chromatin compaction. The MSL complex is required for chromosome stability and genome integrity by maintaining homeostatic levels of H4K16ac. The MSL complex is also involved in gene dosage by promoting up-regulation of genes expressed by the X chromosome. X up-regulation is required to compensate for autosomal biallelic expression. The MSL complex also participates in gene dosage compensation by promoting expression of Tsix non-coding RNA. MSL2 plays a key role in gene dosage by ensuring biallelic expression of a subset of dosage-sensitive genes, including many haploinsufficient genes. Acts by promoting promoter-enhancer contacts, thereby preventing DNA methylation of one allele and creating a methylation-free environment for methylation-sensitive transcription factors such as SP1, KANSL1 and KANSL3. Also acts as an E3 ubiquitin ligase that promotes monoubiquitination of histone H2B at 'Lys-35' (H2BK34Ub), but not that of H2A. This activity is greatly enhanced by heterodimerization with MSL1. H2B ubiquitination in turn stimulates histone H3 methylation at 'Lys-4' (H3K4me) and 'Lys-79' (H3K79me) and leads to gene activation, including that of HOXA9 and MEIS1. Also involved in the DNA damage response by mediating ubiquitination of TP53/p53 and TP53BP1. In Homo sapiens (Human), this protein is E3 ubiquitin-protein ligase MSL2.